A 91-amino-acid polypeptide reads, in one-letter code: Small ribosomal subunit protein bS18 (91 aa).

It belongs to the bacterial ribosomal protein bS18 family. As to quaternary structure, part of the 30S ribosomal subunit. Forms a tight heterodimer with protein bS6.

Its function is as follows. Binds as a heterodimer with protein bS6 to the central domain of the 16S rRNA, where it helps stabilize the platform of the 30S subunit. This chain is Small ribosomal subunit protein bS18, found in Gluconacetobacter diazotrophicus (strain ATCC 49037 / DSM 5601 / CCUG 37298 / CIP 103539 / LMG 7603 / PAl5).